Here is a 237-residue protein sequence, read N- to C-terminus: Ribonuclease PH (237 aa).

Residues Arg86 and 124–126 contribute to the phosphate site; that span reads GTR.

Belongs to the RNase PH family. As to quaternary structure, homohexameric ring arranged as a trimer of dimers.

The enzyme catalyses tRNA(n+1) + phosphate = tRNA(n) + a ribonucleoside 5'-diphosphate. Its function is as follows. Phosphorolytic 3'-5' exoribonuclease that plays an important role in tRNA 3'-end maturation. Removes nucleotide residues following the 3'-CCA terminus of tRNAs; can also add nucleotides to the ends of RNA molecules by using nucleoside diphosphates as substrates, but this may not be physiologically important. Probably plays a role in initiation of 16S rRNA degradation (leading to ribosome degradation) during starvation. In Shewanella sp. (strain W3-18-1), this protein is Ribonuclease PH.